We begin with the raw amino-acid sequence, 674 residues long: Carbon monoxide dehydrogenase/acetyl-CoA synthase subunit beta (674 aa).

Residues 1-25 (MPRFRDLSHNCRPSEAPRVMEPKNR) are disordered. The [4Fe-4S] cluster site is built by cysteine 59, cysteine 67, cysteine 68, cysteine 71, cysteine 76, and cysteine 90. [Ni-4Fe-4S] cluster-binding residues include histidine 283, cysteine 317, cysteine 355, cysteine 470, cysteine 500, and cysteine 550.

As to quaternary structure, tetramer of two alpha and two beta chains. The cofactor is [Ni-Fe-S] cluster. [4Fe-4S] cluster is required as a cofactor.

The enzyme catalyses CO + 2 oxidized [2Fe-2S]-[ferredoxin] + H2O = 2 reduced [2Fe-2S]-[ferredoxin] + CO2 + 2 H(+). In terms of biological role, the beta subunit (this protein) generates CO from CO(2), while the alpha subunit combines the CO with CoA and a methyl group to form acetyl-CoA. The methyl group, which is incorporated into acetyl-CoA, is transferred to the alpha subunit by a corrinoid iron-sulfur protein. This chain is Carbon monoxide dehydrogenase/acetyl-CoA synthase subunit beta, found in Moorella thermoacetica (Clostridium thermoaceticum).